A 297-amino-acid chain; its full sequence is UDP-N-acetylenolpyruvoylglucosamine reductase (297 aa).

An FAD-binding PCMH-type domain is found at 22–195 (RAGGTARYYA…LAGRFRLQRG (174 aa)). The active site involves Arg169. Ser223 (proton donor) is an active-site residue. Residue Glu293 is part of the active site.

The protein belongs to the MurB family. The cofactor is FAD.

Its subcellular location is the cytoplasm. The catalysed reaction is UDP-N-acetyl-alpha-D-muramate + NADP(+) = UDP-N-acetyl-3-O-(1-carboxyvinyl)-alpha-D-glucosamine + NADPH + H(+). It functions in the pathway cell wall biogenesis; peptidoglycan biosynthesis. Functionally, cell wall formation. The polypeptide is UDP-N-acetylenolpyruvoylglucosamine reductase (Chloroflexus aurantiacus (strain ATCC 29364 / DSM 637 / Y-400-fl)).